A 406-amino-acid polypeptide reads, in one-letter code: 8-amino-7-oxononanoate synthase (406 aa).

R20 provides a ligand contact to substrate. 116-117 (GY) serves as a coordination point for pyridoxal 5'-phosphate. Substrate is bound at residue H141. Residues S187, H215, and T243 each contribute to the pyridoxal 5'-phosphate site. N6-(pyridoxal phosphate)lysine is present on K246. T366 contacts substrate.

It belongs to the class-II pyridoxal-phosphate-dependent aminotransferase family. BioF subfamily. Homodimer. Pyridoxal 5'-phosphate is required as a cofactor.

It carries out the reaction 6-carboxyhexanoyl-[ACP] + L-alanine + H(+) = (8S)-8-amino-7-oxononanoate + holo-[ACP] + CO2. It participates in cofactor biosynthesis; biotin biosynthesis. Catalyzes the decarboxylative condensation of pimeloyl-[acyl-carrier protein] and L-alanine to produce 8-amino-7-oxononanoate (AON), [acyl-carrier protein], and carbon dioxide. The sequence is that of 8-amino-7-oxononanoate synthase from Cupriavidus metallidurans (strain ATCC 43123 / DSM 2839 / NBRC 102507 / CH34) (Ralstonia metallidurans).